A 602-amino-acid polypeptide reads, in one-letter code: Pyranose dehydrogenase 1 (602 aa).

A signal peptide spans 1–25; it reads MLPRVTKLNSRLLSLALLGIQIARG. Asn-100 carries an N-linked (GlcNAc...) asparagine glycan. A Tele-8alpha-FAD histidine modification is found at His-128. N-linked (GlcNAc...) asparagine glycosylation is found at Asn-200, Asn-277, and Asn-344. The active-site Proton acceptor is the His-537. Residue His-581 is part of the active site.

The protein belongs to the GMC oxidoreductase family. As to quaternary structure, monomer. The cofactor is FAD. N-glycosylated.

Its subcellular location is the secreted. The enzyme catalyses pyranose + acceptor = pyranos-2-ulose + reduced acceptor.. It catalyses the reaction pyranose + acceptor = pyranos-3-ulose + reduced acceptor.. The catalysed reaction is pyranose + acceptor = pyranos-2,3-diulose + reduced acceptor.. It carries out the reaction a pyranoside + acceptor = a pyranosid-3-ulose + reduced acceptor.. The enzyme catalyses a pyranoside + acceptor = a pyranosid-3,4-diulose + reduced acceptor.. Functionally, catalyzes the single-oxidation or sequential double oxidation reaction of carbohydrates primarily at carbon-2 and/or carbon-3 with the concomitant reduction of the flavin. The enzyme exhibits a broad sugar substrate specificity, oxidizing different aldopyranoses to the corresponding C-1, C-2, C-3 or C-1,2, C-2,3 and C-3,4 (di)dehydro sugars with substrate-specific regioselectivity. Accepts only a narrow range of electron acceptors such as substituted benzoquinones and complexed metal ions and reacts extremely slowly with O(2) as acceptor. May play a role in the natural recycling of plant matter by oxidizing all major monosaccharides in lignocellulose and by reducing quinone compounds or reactive radical species generated during lignin depolymerization. This Leucoagaricus meleagris (Western flat-topped agaric) protein is Pyranose dehydrogenase 1.